The sequence spans 307 residues: Protease HtpX homolog (307 aa).

Transmembrane regions (helical) follow at residues 7-27 and 28-48; these read AILLAGLTGLFMGVGYLIGGA and SGATIALVVAAATNLFAYWNS. Residue histidine 130 coordinates Zn(2+). Residue glutamate 131 is part of the active site. Histidine 134 provides a ligand contact to Zn(2+). 2 consecutive transmembrane segments (helical) span residues 145-165 and 171-191; these read ITATIAGAISMLAQFGMFFGG and GPGIIGSLAMMILAPFGAMLV. Glutamate 200 contributes to the Zn(2+) binding site. The tract at residues 277 to 307 is disordered; it reads AGQSGGGLAPGGPPPDPSSPWNKGSRRGPWG.

It belongs to the peptidase M48B family. Zn(2+) is required as a cofactor.

It is found in the cell inner membrane. The sequence is that of Protease HtpX homolog from Nitrobacter winogradskyi (strain ATCC 25391 / DSM 10237 / CIP 104748 / NCIMB 11846 / Nb-255).